Consider the following 541-residue polypeptide: Membrane protein insertase YidC (541 aa).

The next 5 membrane-spanning stretches (helical) occupy residues 7–27, 340–360, 415–435, 453–473, and 494–514; these read LFLV…QTDH, QLIH…TFIV, LGGC…YYML, LAAP…MFFI, and PVIF…YYIV.

This sequence belongs to the OXA1/ALB3/YidC family. Type 1 subfamily. Interacts with the Sec translocase complex via SecD. Specifically interacts with transmembrane segments of nascent integral membrane proteins during membrane integration.

It is found in the cell inner membrane. Functionally, required for the insertion and/or proper folding and/or complex formation of integral membrane proteins into the membrane. Involved in integration of membrane proteins that insert both dependently and independently of the Sec translocase complex, as well as at least some lipoproteins. Aids folding of multispanning membrane proteins. The sequence is that of Membrane protein insertase YidC from Edwardsiella ictaluri (strain 93-146).